The sequence spans 152 residues: Small ribosomal subunit protein uS15 (152 aa).

Residues M1 to R19 show a composition bias toward basic residues. Residues M1–T21 are disordered.

It belongs to the universal ribosomal protein uS15 family. As to quaternary structure, part of the 30S ribosomal subunit.

The chain is Small ribosomal subunit protein uS15 from Methanocella arvoryzae (strain DSM 22066 / NBRC 105507 / MRE50).